Here is a 379-residue protein sequence, read N- to C-terminus: 3-dehydroquinate synthase (379 aa).

The protein belongs to the archaeal-type DHQ synthase family.

The catalysed reaction is 2-amino-2,3,7-trideoxy-D-lyxo-hept-6-ulosonate + NAD(+) + H2O = 3-dehydroquinate + NH4(+) + NADH + H(+). In terms of biological role, catalyzes the oxidative deamination and cyclization of 2-amino-3,7-dideoxy-D-threo-hept-6-ulosonic acid (ADH) to yield 3-dehydroquinate (DHQ), which is fed into the canonical shikimic pathway of aromatic amino acid biosynthesis. The polypeptide is 3-dehydroquinate synthase (Methanococcoides burtonii (strain DSM 6242 / NBRC 107633 / OCM 468 / ACE-M)).